A 399-amino-acid chain; its full sequence is MLRLGRSAASEVSSIRNSLQLQLEQRGARPMQCAYQTQSHSNPEGAKRGRSPMSLAVMGAAALSVGLELQTDGIAQARAAMEPGTQLQRHKWQLFDQIGAGAFGVVRLGMHEESGEVAAVKIVPLENPNDQRSYPALEREIAALKLVKALGGHNSIVDLRDVYVEGRKLFLVTELARGGELFEQIVAYGSFPELKARDVAREMASALSFMHRHGLVHKDVKPENILMSARVVDHNSGVYRKSNRHESSSLVKLADFGSAGPASVNTNLEDIGTAAYLPPEVLNSGLCTSACDMWALGCVLYIMLSGSHPYDLDGMSADSVVEHRVKSEPVTFDFSAWDNVSPHAKDLISKLLVKDPTLRLTADQMLQHPWMNASAEAAAAGLRRPSPLLAGQPIPISPA.

Residues 30–50 (PMQCAYQTQSHSNPEGAKRGR) form a disordered region. Residues 92–371 (WQLFDQIGAG…ADQMLQHPWM (280 aa)) form the Protein kinase domain. ATP is bound by residues 98–106 (IGAGAFGVV) and K121. D219 acts as the Proton acceptor in catalysis.

This sequence belongs to the protein kinase superfamily. CAMK Ser/Thr protein kinase family.

It catalyses the reaction L-seryl-[protein] + ATP = O-phospho-L-seryl-[protein] + ADP + H(+). The enzyme catalyses L-threonyl-[protein] + ATP = O-phospho-L-threonyl-[protein] + ADP + H(+). Its function is as follows. May regulate an early stage of the zoospore pathway. The protein is Serine/threonine-protein kinase PKZ1 of Phytophthora infestans (strain T30-4) (Potato late blight agent).